The sequence spans 407 residues: Protein S-acyltransferase 8 (407 aa).

Transmembrane regions (helical) follow at residues 29–49 (SLPL…VFVA) and 62–82 (GYAI…LLFF). Residues 136-186 (KYCDTCMLYRPPRCSHCSICNNCVERFDHHCPWVGQCIGLRNYRYFFMFVS) form the DHHC domain. Cys166 acts as the S-palmitoyl cysteine intermediate in catalysis. A run of 2 helical transmembrane segments spans residues 181 to 201 (FFMF…MSAV) and 224 to 244 (AVVL…LTAF). Residues 348-368 (AEDANNNQPHHTLDIDHERAG) form a disordered region. Residues 358–368 (HTLDIDHERAG) show a composition bias toward basic and acidic residues. Phosphoserine is present on Ser385.

This sequence belongs to the DHHC palmitoyltransferase family. As to expression, expressed in flowers and pollen.

Its subcellular location is the cell membrane. The enzyme catalyses L-cysteinyl-[protein] + hexadecanoyl-CoA = S-hexadecanoyl-L-cysteinyl-[protein] + CoA. In terms of biological role, S-acyltransferase involved in protein lipid modification. The protein is Protein S-acyltransferase 8 (PAT08) of Arabidopsis thaliana (Mouse-ear cress).